The primary structure comprises 846 residues: SLIT and NTRK-like protein 2 (846 aa).

An N-terminal signal peptide occupies residues 1–21 (MLSGVWFLSVLTVAGILQTES). The Extracellular segment spans residues 22 to 622 (RKTAKDICKI…LHTEVPLSVL (601 aa)). 2 disulfide bridges follow: Cys-29-Cys-35 and Cys-33-Cys-46. LRR repeat units lie at residues 63 to 84 (RIYQ…EFVN), 87 to 108 (NAVT…AFSG), 111 to 132 (TLKR…TFLG), 135 to 156 (SLEY…AFSK), 159 to 180 (KLKV…VFRF), and 182 to 203 (LLTH…GVLE). Residue Asn-84 is glycosylated (N-linked (GlcNAc...) asparagine). Positions 167–215 (DNLLLSLPSNVFRFVLLTHLDLRGNRLKVMPFAGVLEHIGGIMEIQLEE) are required for interaction with PTPRD. The LRRCT 1 domain occupies 216 to 265 (NPWNCTCDLLPLKAWLDTITVFVGEIVCETPFRLHGKDVTQLTRQDLCPR). N-linked (GlcNAc...) asparagine glycosylation occurs at Asn-219. 2 cysteine pairs are disulfide-bonded: Cys-220-Cys-243 and Cys-222-Cys-263. Residues 261–322 (DLCPRKSASG…TPRVTVSKDR (62 aa)) form a disordered region. 2 stretches are compositionally biased toward low complexity: residues 267–276 (SASGDSSQRS) and 285–300 (RLTP…TRAP). The 43-residue stretch at 332–374 (QTKSPVALTCPSSCVCTSQSSDNGLNVNCQERKFTNISDLQPK) folds into the LRRNT domain. LRR repeat units lie at residues 377-398 (SPKK…DLLE), 401-422 (SLDL…AFTN), 425-446 (SLRR…MFDG), 449-470 (SLQY…TFDA), 473-494 (NLQL…IFGG), and 496-517 (ALTR…GVLD). The N-linked (GlcNAc...) asparagine glycan is linked to Asn-422. The region spanning 530–581 (NPWDCTCDIMGLKDWTEHANSPVIINEVTCESPAKHAGEILKFLGREAICPE) is the LRRCT 2 domain. A helical membrane pass occupies residues 623 to 643 (ILGLLVVFILSVCFGAGLFVF). Residues 644 to 846 (VLKRRKGVPN…LEKQTAISQL (203 aa)) lie on the Cytoplasmic side of the membrane. Position 757 is a phosphotyrosine (Tyr-757).

Belongs to the SLITRK family. As to quaternary structure, interacts with PTPRD; this interaction is PTPRD splicing-dependent and may induce pre-synaptic differentiation. Interacts with NTRK2. As to expression, in the adult, significant expression is detected only in the brain. Broadly expressed in embryonic brain with highest expression in ventricular layer, subventricular zone, cortical plate, pyramidal layer of hippocampus, subicular neuroepithelium, thalamus, hypothalamus and spinal cord.

It is found in the membrane. The protein localises to the cell membrane. Its subcellular location is the cell projection. The protein resides in the dendrite. It is involved in synaptogenesis. Promotes excitatory synapse differentiation. Suppresses neurite outgrowth. Involved in the negative regulation of NTRK2. The sequence is that of SLIT and NTRK-like protein 2 (Slitrk2) from Mus musculus (Mouse).